Consider the following 392-residue polypeptide: Bifunctional enzyme IspD/IspF (392 aa).

2-C-methyl-D-erythritol 4-phosphate cytidylyltransferase regions lie at residues 1 to 234 (MTES…MMRT) and 1 to 235 (MTES…MRTA). A 2-C-methyl-D-erythritol 2,4-cyclodiphosphate synthase region spans residues 235–392 (AVGMGYDVHR…AVATIQLPET (158 aa)). Residues Asp-241 and His-243 each contribute to the a divalent metal cation site. Residues 241-243 (DVH) and 267-268 (HS) contribute to the 4-CDP-2-C-methyl-D-erythritol 2-phosphate site. His-275 provides a ligand contact to a divalent metal cation. Residues 289 to 291 (DIG), 365 to 368 (TTTE), Phe-372, and Arg-375 each bind 4-CDP-2-C-methyl-D-erythritol 2-phosphate.

In the N-terminal section; belongs to the IspD/TarI cytidylyltransferase family. IspD subfamily. It in the C-terminal section; belongs to the IspF family. The cofactor is a divalent metal cation.

It catalyses the reaction 2-C-methyl-D-erythritol 4-phosphate + CTP + H(+) = 4-CDP-2-C-methyl-D-erythritol + diphosphate. The enzyme catalyses 4-CDP-2-C-methyl-D-erythritol 2-phosphate = 2-C-methyl-D-erythritol 2,4-cyclic diphosphate + CMP. It participates in isoprenoid biosynthesis; isopentenyl diphosphate biosynthesis via DXP pathway; isopentenyl diphosphate from 1-deoxy-D-xylulose 5-phosphate: step 2/6. It functions in the pathway isoprenoid biosynthesis; isopentenyl diphosphate biosynthesis via DXP pathway; isopentenyl diphosphate from 1-deoxy-D-xylulose 5-phosphate: step 4/6. Bifunctional enzyme that catalyzes the formation of 4-diphosphocytidyl-2-C-methyl-D-erythritol from CTP and 2-C-methyl-D-erythritol 4-phosphate (MEP) (IspD), and catalyzes the conversion of 4-diphosphocytidyl-2-C-methyl-D-erythritol 2-phosphate (CDP-ME2P) to 2-C-methyl-D-erythritol 2,4-cyclodiphosphate (ME-CPP) with a corresponding release of cytidine 5-monophosphate (CMP) (IspF). This is Bifunctional enzyme IspD/IspF from Sphingopyxis alaskensis (strain DSM 13593 / LMG 18877 / RB2256) (Sphingomonas alaskensis).